The sequence spans 396 residues: MTINPVSRKVAWLRVVTLAIAAFIFNTTEFVPVGLLSDIAESFHMQTAQVGIMLTIYAWVVAVMSLPFMLLTSQMERRKLLICLFVLFIASHVLSFLAWNFTVLVISRIGIAFAHAIFWSITASLAIRLAPAGKRAQALSLIATGTALAMVLGLPIGRVVGQYFGWRTTFFAIGMGALITLLCLIKLLPKLPSEHSGSLKSLPLLFRCPALMSLYVLTVVVVTAHYTAYSYIEPFVQNVAGLSANFATVLLLLLGGAGIIGSLVFGKLGNRHASSLVSIAIALLVVCLLLLLPAADSEAHLAILSIFWGIAIMVIGLGMQVKVLALAPDATDVAMALFSGIFNIGIGAGALVGNQVSLHWSMSAIGYIGAIPACAALVWAVLIFRKWPVTLEEQPH.

Transmembrane regions (helical) follow at residues 15-35 (VVTL…PVGL), 50-70 (VGIM…PFML), 81-101 (LICL…AWNF), 103-123 (VLVI…SITA), 136-156 (AQAL…GLPI), 169-189 (TFFA…KLLP), 202-222 (LPLL…VVVV), 246-266 (FATV…LVFG), 275-295 (SLVS…LPAA), 301-321 (LAIL…GMQV), 333-353 (VAMA…ALVG), and 364-384 (AIGY…VLIF).

The protein belongs to the major facilitator superfamily. SotB (TC 2.A.1.2) family.

The protein resides in the cell inner membrane. Its function is as follows. Involved in the efflux of sugars. The physiological role may be the reduction of the intracellular concentration of toxic sugars or sugar metabolites. The sequence is that of Probable sugar efflux transporter from Salmonella paratyphi A (strain ATCC 9150 / SARB42).